A 274-amino-acid polypeptide reads, in one-letter code: uncharacterized protein (274 aa).

Residues 235–274 form a disordered region; sequence ETFDTQQDPKKTPETDKNAAYKGKEKKGKKEERGPRSIMK. A compositionally biased stretch (basic and acidic residues) spans 241-274; the sequence is QDPKKTPETDKNAAYKGKEKKGKKEERGPRSIMK.

This is an uncharacterized protein from Treponema pallidum (strain Nichols).